The chain runs to 295 residues: Acetyl-coenzyme A carboxylase carboxyl transferase subunit beta (295 aa).

In terms of domain architecture, CoA carboxyltransferase N-terminal spans 25-294; the sequence is VWTKCTSCEQ…PFNAEELSDT (270 aa). Cys29, Cys32, Cys48, and Cys51 together coordinate Zn(2+). Residues 29 to 51 form a C4-type zinc finger; the sequence is CTSCEQVLYRDELKRHLEVCPKC.

The protein belongs to the AccD/PCCB family. In terms of assembly, acetyl-CoA carboxylase is a heterohexamer composed of biotin carboxyl carrier protein (AccB), biotin carboxylase (AccC) and two subunits each of ACCase subunit alpha (AccA) and ACCase subunit beta (AccD). It depends on Zn(2+) as a cofactor.

The protein localises to the cytoplasm. The catalysed reaction is N(6)-carboxybiotinyl-L-lysyl-[protein] + acetyl-CoA = N(6)-biotinyl-L-lysyl-[protein] + malonyl-CoA. Its pathway is lipid metabolism; malonyl-CoA biosynthesis; malonyl-CoA from acetyl-CoA: step 1/1. Functionally, component of the acetyl coenzyme A carboxylase (ACC) complex. Biotin carboxylase (BC) catalyzes the carboxylation of biotin on its carrier protein (BCCP) and then the CO(2) group is transferred by the transcarboxylase to acetyl-CoA to form malonyl-CoA. This is Acetyl-coenzyme A carboxylase carboxyl transferase subunit beta from Mannheimia succiniciproducens (strain KCTC 0769BP / MBEL55E).